The following is a 694-amino-acid chain: Lamina-associated polypeptide 2, isoform alpha (694 aa).

Positions 5 to 48 (LEDPSVLTKDKLKSELVANNVTLPAGEQRKDVYVQLYLQHLTAR) constitute an LEM-like domain. Disordered regions lie at residues 47-117 (ARNR…ELTN) and 150-209 (REQG…FSEL). The tract at residues 49 to 108 (NRPPLPAGTNSKGPPDFSSDEEREPTPVLGSGAAAAGRSRAAVGRKATKKTDKPRQEDKD) is linker. T57 carries the post-translational modification Phosphothreonine. Residues S59, S66, and S67 each carry the phosphoserine modification. Residue T74 is modified to Phosphothreonine. Residues 78-93 (GSGAAAAGRSRAAVGR) show a composition bias toward low complexity. S79 carries the post-translational modification Phosphoserine. R86 and R88 each carry omega-N-methylarginine. The span at 97-106 (KKTDKPRQED) shows a compositional bias: basic and acidic residues. Acidic residues predominate over residues 107–117 (KDDLDVTELTN). The region spanning 109–153 (DLDVTELTNEDLLDQLVKYGVNPGPIVGTTRKLYEKKLLKLREQG) is the LEM domain. The residue at position 154 (T154) is a Phosphothreonine. Residues 155 to 178 (ESRSSTPLPTISSSAENTRQNGSN) are compositionally biased toward polar residues. Residues S156 and S159 each carry the phosphoserine modification. 2 positions are modified to phosphothreonine: T160 and T164. Residues S166 and S168 each carry the phosphoserine modification. Over residues 179 to 191 (DSDRYSDNEEGKK) the composition is skewed to basic and acidic residues. Positions 190 to 196 (KKKEHKK) match the Nuclear localization signal motif. S272, S312, S351, S354, S370, and S424 each carry phosphoserine. Residues 338–368 (QPLCPERSHISDQSPLSSKRKALEESESSQL) form a disordered region. Residues 558–657 (TESCNQQLDL…VGRRYLWLKD (100 aa)) are a coiled coil. At K656 the chain carries N6-acetyllysine.

It belongs to the LEM family. As to quaternary structure, interacts with LMNA, BANF1 and RB1 and with chromosomes. Associates directly or indirectly with lamins at specific cell-cycle stages. Interacts with CMTM6. Post-translationally, phosphorylated in a mitose-specific manner. In terms of tissue distribution, expressed in many tissues. Most abundant in adult thymus and fetal liver.

Its subcellular location is the nucleus. The protein resides in the chromosome. Functionally, may be involved in the structural organization of the nucleus and in the post-mitotic nuclear assembly. Plays an important role, together with LMNA, in the nuclear anchorage of RB1. Its function is as follows. TP and TP5 may play a role in T-cell development and function. TP5 is an immunomodulating pentapeptide. The chain is Lamina-associated polypeptide 2, isoform alpha (TMPO) from Homo sapiens (Human).